Consider the following 417-residue polypeptide: NADH-quinone oxidoreductase subunit D (417 aa).

Belongs to the complex I 49 kDa subunit family. NDH-1 is composed of 14 different subunits. Subunits NuoB, C, D, E, F, and G constitute the peripheral sector of the complex.

The protein resides in the cell inner membrane. It carries out the reaction a quinone + NADH + 5 H(+)(in) = a quinol + NAD(+) + 4 H(+)(out). In terms of biological role, NDH-1 shuttles electrons from NADH, via FMN and iron-sulfur (Fe-S) centers, to quinones in the respiratory chain. The immediate electron acceptor for the enzyme in this species is believed to be ubiquinone. Couples the redox reaction to proton translocation (for every two electrons transferred, four hydrogen ions are translocated across the cytoplasmic membrane), and thus conserves the redox energy in a proton gradient. The sequence is that of NADH-quinone oxidoreductase subunit D from Acidovorax sp. (strain JS42).